We begin with the raw amino-acid sequence, 228 residues long: Cytochrome P450 monooxygenase ataY (228 aa).

A heme-binding site is contributed by Cys-216.

This sequence belongs to the cytochrome P450 family. Heme serves as cofactor.

The protein operates within mycotoxin biosynthesis. Cytochrome P450 monooxygenase; part of the gene cluster that mediates the biosynthesis of acetylaranotin, a member of the epipolythiodioxopiperazine (ETP) class of toxins characterized by a disulfide-bridged cyclic dipeptide. The first step of acetylaranotin biosynthesis is performed by the NRPS ataP which produces diketopiperazine cyclo-L-Phe-L-Phe via the condensation of 2 phenylalanines (L-Phe). The ataC domain of ataTC then catalyzes the formation of bishydroxylation of cyclo-L-Phe-L-Phe. The glutathione S-transferase domain ataG in ataIMG further catalyzes the conjugation of two glutathiones to the bishydroxylated intermediate. Next, the dipeptidase ataJ removes the Glu residues. The following step is performed by the carbon sulfur lyase domain ataI of ataIMG which may convert the bis-cysteinyl adduct to yield an epidithiol intermediate. The ataT domain from ataTC then catalyzes the oxidation of the free dithiols, followed by a cyclization step catalyzed by the cytochrome P450 ataF. AtaF probably acts as an epoxidase to promote a dual epoxidation formation at C8 and C9 along with C8' and C9', followed by the spontaneous nucleophilic attack of the amide nitrogens N10 and N10' to yield an intermediate with the pyrrolidine partial structure. The final steps of acetylaranotin biosynthesis involve the acetylation and ring rearrangement of an epitetrathiodiketopiperazine intermediate to produce acetylaranotin. AtaH probably catalyzes the acetylation of epitetrathiodiketopiperazine to produce a diacetate and ataY is responsible for the formation of the dihydrooxepin moiety that converts the diacetate intermediate to acetylaranotin via acetylapoaranotin. Both enzymes could function independently in the absence of the other. The acetylaranotin bis-thiomethyltransferase ataS located outside of acetylaranotin gene cluster is the main thiomethyltransferase responsible for converting acetylaranotin and its related intermediates to their methylated forms. The protein is Cytochrome P450 monooxygenase ataY of Aspergillus terreus (strain NIH 2624 / FGSC A1156).